The chain runs to 76 residues: ATP synthase subunit 9, mitochondrial (76 aa).

A run of 2 helical transmembrane segments spans residues 14 to 34 (MATLGLGGAAIGIALVFVALI) and 52 to 72 (ILGFALAEACGLFCLMMSFLL).

It belongs to the ATPase C chain family. In terms of assembly, F-type ATPases have 2 components, CF(1) - the catalytic core - and CF(0) - the membrane proton channel. CF(1) has five subunits: alpha(3), beta(3), gamma(1), delta(1), epsilon(1). CF(0) has three main subunits: a, b and c.

It is found in the mitochondrion membrane. Mitochondrial membrane ATP synthase (F(1)F(0) ATP synthase or Complex V) produces ATP from ADP in the presence of a proton gradient across the membrane which is generated by electron transport complexes of the respiratory chain. F-type ATPases consist of two structural domains, F(1) - containing the extramembraneous catalytic core and F(0) - containing the membrane proton channel, linked together by a central stalk and a peripheral stalk. During catalysis, ATP synthesis in the catalytic domain of F(1) is coupled via a rotary mechanism of the central stalk subunits to proton translocation. Part of the complex F(0) domain. A homomeric c-ring of probably 10 subunits is part of the complex rotary element. In Debaryomyces hansenii (strain ATCC 36239 / CBS 767 / BCRC 21394 / JCM 1990 / NBRC 0083 / IGC 2968) (Yeast), this protein is ATP synthase subunit 9, mitochondrial (ATP9).